The following is a 240-amino-acid chain: Methylthioribulose-1-phosphate dehydratase (240 aa).

Position 99 (cysteine 99) interacts with substrate. Zn(2+) is bound by residues histidine 116 and histidine 118. The active-site Proton donor/acceptor is the glutamate 145. Histidine 201 contributes to the Zn(2+) binding site.

Belongs to the aldolase class II family. MtnB subfamily. Zn(2+) is required as a cofactor.

The protein resides in the cytoplasm. It catalyses the reaction 5-(methylsulfanyl)-D-ribulose 1-phosphate = 5-methylsulfanyl-2,3-dioxopentyl phosphate + H2O. It functions in the pathway amino-acid biosynthesis; L-methionine biosynthesis via salvage pathway; L-methionine from S-methyl-5-thio-alpha-D-ribose 1-phosphate: step 2/6. Its function is as follows. Catalyzes the dehydration of methylthioribulose-1-phosphate (MTRu-1-P) into 2,3-diketo-5-methylthiopentyl-1-phosphate (DK-MTP-1-P). The polypeptide is Methylthioribulose-1-phosphate dehydratase (Ajellomyces capsulatus (strain H143) (Darling's disease fungus)).